Here is a 184-residue protein sequence, read N- to C-terminus: ATP synthase subunit b, chloroplastic (184 aa).

The chain crosses the membrane as a helical span at residues 27 to 49 (LATNLINLSVVLGVLIFFGKGVL).

This sequence belongs to the ATPase B chain family. As to quaternary structure, F-type ATPases have 2 components, F(1) - the catalytic core - and F(0) - the membrane proton channel. F(1) has five subunits: alpha(3), beta(3), gamma(1), delta(1), epsilon(1). F(0) has four main subunits: a(1), b(1), b'(1) and c(10-14). The alpha and beta chains form an alternating ring which encloses part of the gamma chain. F(1) is attached to F(0) by a central stalk formed by the gamma and epsilon chains, while a peripheral stalk is formed by the delta, b and b' chains.

The protein localises to the plastid. It is found in the chloroplast thylakoid membrane. In terms of biological role, f(1)F(0) ATP synthase produces ATP from ADP in the presence of a proton or sodium gradient. F-type ATPases consist of two structural domains, F(1) containing the extramembraneous catalytic core and F(0) containing the membrane proton channel, linked together by a central stalk and a peripheral stalk. During catalysis, ATP synthesis in the catalytic domain of F(1) is coupled via a rotary mechanism of the central stalk subunits to proton translocation. Functionally, component of the F(0) channel, it forms part of the peripheral stalk, linking F(1) to F(0). This Guizotia abyssinica (Niger) protein is ATP synthase subunit b, chloroplastic.